The primary structure comprises 121 residues: Large ribosomal subunit protein uL18 (121 aa).

This sequence belongs to the universal ribosomal protein uL18 family. In terms of assembly, part of the 50S ribosomal subunit; part of the 5S rRNA/L5/L18/L25 subcomplex. Contacts the 5S and 23S rRNAs.

Its function is as follows. This is one of the proteins that bind and probably mediate the attachment of the 5S RNA into the large ribosomal subunit, where it forms part of the central protuberance. The protein is Large ribosomal subunit protein uL18 of Thermoanaerobacter pseudethanolicus (strain ATCC 33223 / 39E) (Clostridium thermohydrosulfuricum).